The primary structure comprises 334 residues: MSIEQLAETAQAMVASGKGIIAIDESAGTIAKRFSSVGIENIEENRRAYRELLLTTPKLSDYISGAILFDETIRQSTKAGVPFPKYMAEHGIIPGIKVDKGAYPLAGCPGELVTEGLDGLRARLEEYYKLGARFAKWRAVINIGDDIPSGMCIDANVHALARYAALCQEQGLVPMVEPEVIMDGNHDISAAYEVTEATLRSLFNALYEQNVVLEGTILKASMVIPGTDCEEQASIDEVAESTVMCLKSTVPAILPGIVFLSGGQTDAQSTAHLNAMNQFDPLPWPLSFSYGRAMQQAALKLWSQDMKGNFAKAQQVVYERAKENGLAALGKWKG.

It belongs to the class I fructose-bisphosphate aldolase family.

The enzyme catalyses beta-D-fructose 1,6-bisphosphate = D-glyceraldehyde 3-phosphate + dihydroxyacetone phosphate. The protein operates within carbohydrate degradation; glycolysis; D-glyceraldehyde 3-phosphate and glycerone phosphate from D-glucose: step 4/4. The sequence is that of Probable fructose-bisphosphate aldolase class 1 from Xylella fastidiosa (strain Temecula1 / ATCC 700964).